Consider the following 263-residue polypeptide: 3-methyl-2-oxobutanoate hydroxymethyltransferase (263 aa).

Residues Asp-44 and Asp-83 each contribute to the Mg(2+) site. 3-methyl-2-oxobutanoate-binding positions include 44–45 (DS), Asp-83, and Lys-112. Position 114 (Glu-114) interacts with Mg(2+). Glu-181 acts as the Proton acceptor in catalysis.

Belongs to the PanB family. As to quaternary structure, homodecamer; pentamer of dimers. Mg(2+) is required as a cofactor.

The protein localises to the cytoplasm. It carries out the reaction 3-methyl-2-oxobutanoate + (6R)-5,10-methylene-5,6,7,8-tetrahydrofolate + H2O = 2-dehydropantoate + (6S)-5,6,7,8-tetrahydrofolate. It participates in cofactor biosynthesis; (R)-pantothenate biosynthesis; (R)-pantoate from 3-methyl-2-oxobutanoate: step 1/2. Functionally, catalyzes the reversible reaction in which hydroxymethyl group from 5,10-methylenetetrahydrofolate is transferred onto alpha-ketoisovalerate to form ketopantoate. This chain is 3-methyl-2-oxobutanoate hydroxymethyltransferase, found in Nitrosospira multiformis (strain ATCC 25196 / NCIMB 11849 / C 71).